The sequence spans 186 residues: MDITITPLASSTLWSADITPTTCSENLLDWLLDQNSLTRKLQALSADFKVKVRQQVTLSHSKDLLSPYFSEENKVLVREVLLVCDNKPVVFAQTEIPFSTLTDQQAKLAEIGTDSLGTFLFQDPSMRRDKIEVAQFPVYSAVHQLCIDLNQEVDFPLWGRRSLFYVNNKPLLVSEVFLPASGIYLP.

The substrate site is built by Arg78, Leu116, and Glu175.

Belongs to the UbiC family.

The protein resides in the cytoplasm. The enzyme catalyses chorismate = 4-hydroxybenzoate + pyruvate. Its pathway is cofactor biosynthesis; ubiquinone biosynthesis. In terms of biological role, removes the pyruvyl group from chorismate, with concomitant aromatization of the ring, to provide 4-hydroxybenzoate (4HB) for the ubiquinone pathway. The protein is Probable chorismate pyruvate-lyase of Psychromonas ingrahamii (strain DSM 17664 / CCUG 51855 / 37).